The sequence spans 198 residues: MRLFYAVFLPEEVRAALVEAQTKVRPFRGWKPVPPHQLHLTLLFLGERPEEELPDYLALGHRLARLEAPFRARLRGTGYFPNEGTPRVWFAKAEAEGFLRLAEGLRAGVEELLGEEAVRIPGWDKPFKPHITLARRKAPAPRVPPVLFGLEWPVEGFALVRSELKPKGPVYTVLEKFSLRGEHGREQAQGPGERPEGD.

The active-site Proton donor is His39. Short sequence motifs (HXTX) lie at residues 39–42 (HLTL) and 130–133 (HITL). His130 serves as the catalytic Proton acceptor.

This sequence belongs to the 2H phosphoesterase superfamily. ThpR family.

The enzyme catalyses a 3'-end 2',3'-cyclophospho-ribonucleotide-RNA + H2O = a 3'-end 2'-phospho-ribonucleotide-RNA + H(+). Hydrolyzes RNA 2',3'-cyclic phosphodiester to an RNA 2'-phosphomonoester. The chain is RNA 2',3'-cyclic phosphodiesterase from Thermus thermophilus (strain ATCC 27634 / DSM 579 / HB8).